The chain runs to 201 residues: Twist-related protein 1 (201 aa).

Residues 1 to 18 are compositionally biased toward low complexity; sequence MMQDVSSSPVSPADDSLS. The tract at residues 1–106 is disordered; it reads MMQDVSSSPV…GGGSPQSYEE (106 aa). Residues 34–43 are compositionally biased toward basic residues; the sequence is RGGRKRRSSR. Composition is skewed to gly residues over residues 46 to 65 and 80 to 100; these read AGGG…GGDE and GCGG…GGGS. The 52-residue stretch at 109-160 folds into the bHLH domain; the sequence is TQRVMANVRERQRTQSLNEAFAALPKIIPTLPSDKLSKIQTLKLAARYIDFL. Residues 162–190 form a sufficient for transactivation activity region; sequence QVLQSDELDSKMASYVAHERLSYAFSVWR.

Efficient DNA binding requires dimerization with another bHLH protein. Homodimer or heterodimer with E proteins such as TCF3. ID1 binds preferentially to TCF3 but does not interact efficiently with TWIST1 so ID1 levels control the amount of TCF3 available to dimerize with TWIST and thus determine the type of dimer formed.

It localises to the nucleus. Acts as a transcriptional regulator. Inhibits myogenesis by sequestrating E proteins, inhibiting trans-activation by MEF2, and inhibiting DNA-binding by MYOD1 through physical interaction. This interaction probably involves the basic domains of both proteins. Also represses expression of pro-inflammatory cytokines such as TNFA and IL1B. Regulates cranial suture patterning and fusion. Activates transcription as a heterodimer with E proteins. Regulates gene expression differentially, depending on dimer composition. Homodimers induce expression of FGFR2 and POSTN while heterodimers repress FGFR2 and POSTN expression and induce THBS1 expression. Heterodimerization is also required for osteoblast differentiation. Represses the activity of the circadian transcriptional activator: NPAS2-BMAL1 heterodimer. The chain is Twist-related protein 1 (TWIST1) from Pan troglodytes (Chimpanzee).